A 142-amino-acid chain; its full sequence is Large ribosomal subunit protein uL13 (142 aa).

Belongs to the universal ribosomal protein uL13 family. Part of the 50S ribosomal subunit.

In terms of biological role, this protein is one of the early assembly proteins of the 50S ribosomal subunit, although it is not seen to bind rRNA by itself. It is important during the early stages of 50S assembly. This chain is Large ribosomal subunit protein uL13, found in Stenotrophomonas maltophilia (strain K279a).